The sequence spans 943 residues: Translation initiation factor IF-2 (943 aa).

The segment covering 99–113 (VKAAQTQAAPVQPEQ) has biased composition (low complexity). The segment at 99–354 (VKAAQTQAAP…LEPNQHAFQA (256 aa)) is disordered. The span at 117 to 141 (DAVKARAEAAARAEARAKAEAEAAK) shows a compositional bias: basic and acidic residues. The segment covering 145–172 (AKAGNKAKPAAQKPTEAKAETAPVAAET) has biased composition (low complexity). Basic and acidic residues predominate over residues 173–197 (KPAEPKEKAVKPKHERNGKGKDAKK). Over residues 200–215 (KPAAPAVPQPVVSAEE) the composition is skewed to low complexity. Residues 216–250 (QAQRDEEARRAAALRAHQEALLKEKQERQARREAM) show a composition bias toward basic and acidic residues. The span at 251–264 (KQQAEQQAKAAQEA) shows a compositional bias: low complexity. Composition is skewed to basic and acidic residues over residues 295-308 (AKKEDRRNRDDEGQ) and 319-335 (GGRDRNNARNGGDERVR). Positions 443–612 (PRPPVVTVMG…LLEAEVLELT (170 aa)) constitute a tr-type G domain. The interval 452 to 459 (GHVDHGKT) is G1. Residue 452-459 (GHVDHGKT) participates in GTP binding. Positions 477-481 (GITQH) are G2. Residues 498-501 (DTPG) form a G3 region. GTP contacts are provided by residues 498–502 (DTPGH) and 552–555 (NKID). The G4 stretch occupies residues 552 to 555 (NKID). The segment at 588–590 (SAK) is G5.

This sequence belongs to the TRAFAC class translation factor GTPase superfamily. Classic translation factor GTPase family. IF-2 subfamily.

The protein resides in the cytoplasm. One of the essential components for the initiation of protein synthesis. Protects formylmethionyl-tRNA from spontaneous hydrolysis and promotes its binding to the 30S ribosomal subunits. Also involved in the hydrolysis of GTP during the formation of the 70S ribosomal complex. The sequence is that of Translation initiation factor IF-2 from Neisseria gonorrhoeae (strain ATCC 700825 / FA 1090).